The chain runs to 493 residues: Glycylpeptide N-tetradecanoyltransferase (493 aa).

The disordered stretch occupies residues 1-30 (MSDSKDSKGKAPQKPNDAEQTPGGKLTPQA). Tetradecanoyl-CoA contacts are provided by residues 82–85 (FKFW), 216–218 (LCI), and 224–228 (SKRLA). Leu-493 serves as the catalytic Proton acceptor; via carboxylate.

Belongs to the NMT family. As to quaternary structure, monomer.

The protein localises to the cytoplasm. It catalyses the reaction N-terminal glycyl-[protein] + tetradecanoyl-CoA = N-tetradecanoylglycyl-[protein] + CoA + H(+). Adds a myristoyl group to the N-terminal glycine residue of certain cellular proteins. This chain is Glycylpeptide N-tetradecanoyltransferase (swoF), found in Emericella nidulans (strain FGSC A4 / ATCC 38163 / CBS 112.46 / NRRL 194 / M139) (Aspergillus nidulans).